A 419-amino-acid polypeptide reads, in one-letter code: UDP-N-acetylglucosamine 1-carboxyvinyltransferase (419 aa).

22–23 (KN) contributes to the phosphoenolpyruvate binding site. Arg-95 provides a ligand contact to UDP-N-acetyl-alpha-D-glucosamine. Residue Cys-119 is the Proton donor of the active site. Position 119 is a 2-(S-cysteinyl)pyruvic acid O-phosphothioketal (Cys-119). Residues Asp-308 and Ile-330 each contribute to the UDP-N-acetyl-alpha-D-glucosamine site.

This sequence belongs to the EPSP synthase family. MurA subfamily.

The protein resides in the cytoplasm. The enzyme catalyses phosphoenolpyruvate + UDP-N-acetyl-alpha-D-glucosamine = UDP-N-acetyl-3-O-(1-carboxyvinyl)-alpha-D-glucosamine + phosphate. Its pathway is cell wall biogenesis; peptidoglycan biosynthesis. Functionally, cell wall formation. Adds enolpyruvyl to UDP-N-acetylglucosamine. In Rickettsia bellii (strain OSU 85-389), this protein is UDP-N-acetylglucosamine 1-carboxyvinyltransferase.